A 462-amino-acid polypeptide reads, in one-letter code: ATP synthase subunit beta (462 aa).

Residue glycine 149 to threonine 156 participates in ATP binding.

The protein belongs to the ATPase alpha/beta chains family. In terms of assembly, F-type ATPases have 2 components, CF(1) - the catalytic core - and CF(0) - the membrane proton channel. CF(1) has five subunits: alpha(3), beta(3), gamma(1), delta(1), epsilon(1). CF(0) has three main subunits: a(1), b(2) and c(9-12). The alpha and beta chains form an alternating ring which encloses part of the gamma chain. CF(1) is attached to CF(0) by a central stalk formed by the gamma and epsilon chains, while a peripheral stalk is formed by the delta and b chains.

It localises to the cell inner membrane. The catalysed reaction is ATP + H2O + 4 H(+)(in) = ADP + phosphate + 5 H(+)(out). In terms of biological role, produces ATP from ADP in the presence of a proton gradient across the membrane. The catalytic sites are hosted primarily by the beta subunits. The polypeptide is ATP synthase subunit beta (Fusobacterium nucleatum subsp. nucleatum (strain ATCC 25586 / DSM 15643 / BCRC 10681 / CIP 101130 / JCM 8532 / KCTC 2640 / LMG 13131 / VPI 4355)).